The sequence spans 611 residues: V-type proton ATPase catalytic subunit A (611 aa).

244-251 (GAFGCGKT) is a binding site for ATP.

The protein belongs to the ATPase alpha/beta chains family. V-ATPase is a heteromultimeric enzyme made up of two complexes: the ATP-hydrolytic V1 complex and the proton translocation V0 complex. The V1 complex consists of three catalytic AB heterodimers that form a heterohexamer, three peripheral stalks each consisting of EG heterodimers, one central rotor including subunits D and F, and the regulatory subunits C and H. The proton translocation complex V0 consists of the proton transport subunit a, a ring of proteolipid subunits c9c'', rotary subunit d and subunit e.

Its subcellular location is the cell membrane. It localises to the vacuole. It is found in the vesicle. The enzyme catalyses ATP + H2O + 4 H(+)(in) = ADP + phosphate + 5 H(+)(out). Its activity is regulated as follows. ATP hydrolysis occurs at the interface between the nucleotide-binding domains of subunits A and B. ATP hydrolysis triggers a conformational change in the subunits D and F, which induces a shift of subunit d. The c-ring is subsequently rotated and results in a continuous proton translocation across the membrane. In terms of biological role, catalytic subunit of the V1 complex of vacuolar(H+)-ATPase (V-ATPase), a multisubunit enzyme composed of a peripheral complex (V1) that hydrolyzes ATP and a membrane integral complex (V0) that translocates protons. V-ATPase is responsible for acidifying and maintaining the pH of intracellular compartments and in some cell types, is targeted to the plasma membrane, where it is responsible for acidifying the extracellular environment. During the trophozoite stage, involved in the acidification of the extracellular space next to the cell membrane. This Plasmodium falciparum (isolate 3D7) protein is V-type proton ATPase catalytic subunit A.